We begin with the raw amino-acid sequence, 514 residues long: G-protein coupled receptor Mth (514 aa).

Positions 1 to 24 are cleaved as a signal peptide; the sequence is MKTLLVLRISTVILVVLVIQKSYA. The Extracellular portion of the chain corresponds to 25–218; it reads DILECDYFDT…CLIVPSITGQ (194 aa). Disulfide bonds link C29/C83, C85/C90, C94/C188, C95/C106, and C150/C209. N-linked (GlcNAc...) asparagine glycosylation is present at N45. N-linked (GlcNAc...) asparagine glycosylation is found at N109, N123, N170, and N198. Residues 219-239 traverse the membrane as a helical segment; sequence TVVMISSLICMVLTIAVYLFV. Topologically, residues 240–248 are cytoplasmic; it reads KKLQNLHGK. A helical membrane pass occupies residues 249 to 269; that stretch reads CFICYMVCLFMGYLFLLLDLW. Topologically, residues 270–278 are extracellular; the sequence is QISISFCKP. Residues 279-299 traverse the membrane as a helical segment; the sequence is AGFLGYFFVMAAFFWLSVISL. Residues 300 to 320 are Cytoplasmic-facing; sequence HLWNTFRGSSHKANRFLFEHR. A helical transmembrane segment spans residues 321–341; the sequence is FLAYNTYAWGMAVVLTGITVL. The Extracellular portion of the chain corresponds to 342–370; it reads ADNIVENQDWNPRVGHEGHCWIYTQAWSA. A helical transmembrane segment spans residues 371–391; sequence MLYFYGPMVFLIAFNITMFIL. Topologically, residues 392 to 424 are cytoplasmic; the sequence is TAKRILGVKKDIQNFAHRQERKQKLNSDKQTYT. Residues 425–445 traverse the membrane as a helical segment; sequence FFLRLFIIMGLSWSLEIGSYF. The Extracellular portion of the chain corresponds to 446 to 454; that stretch reads SQSNQTWAN. N449 is a glycosylation site (N-linked (GlcNAc...) asparagine). A helical membrane pass occupies residues 455–475; that stretch reads VFLVADYLNWSQGIIIFILFV. Topologically, residues 476 to 514 are cytoplasmic; that stretch reads LKRSTWRLLQESIRGEGEEVNNSEEEISLENTTTRNVLL.

The protein belongs to the G-protein coupled receptor 2 family. Mth subfamily. As to quaternary structure, homodimer.

The protein localises to the cell membrane. In terms of biological role, involved in biological aging and stress response. Essential for adult survival. Required in the presynaptic motor neuron to up-regulate neurotransmitter exocytosis at larval glutamatergic neuromuscular junctions (NMJs). Regulates a step associated with docking and clustering of vesicles at release sites. SP/Acp70A and sun are agonists that activate mth in vitro. The chain is G-protein coupled receptor Mth (mth) from Drosophila melanogaster (Fruit fly).